We begin with the raw amino-acid sequence, 704 residues long: Polyribonucleotide nucleotidyltransferase (704 aa).

Mg(2+)-binding residues include D488 and D494. Positions 555–614 constitute a KH domain; that stretch reads PRITTIKINPEKIRDVIGKGGATIRALTEETGTTIELDDDGTVKIASSNGEATKEAIRRI. Residues 624–692 form the S1 motif domain; it reads GTVYNGKVVR…RQGRVRLSMK (69 aa).

It belongs to the polyribonucleotide nucleotidyltransferase family. Component of the RNA degradosome, which is a multiprotein complex involved in RNA processing and mRNA degradation. Requires Mg(2+) as cofactor.

The protein resides in the cytoplasm. It catalyses the reaction RNA(n+1) + phosphate = RNA(n) + a ribonucleoside 5'-diphosphate. Involved in mRNA degradation. Catalyzes the phosphorolysis of single-stranded polyribonucleotides processively in the 3'- to 5'-direction. In Shewanella pealeana (strain ATCC 700345 / ANG-SQ1), this protein is Polyribonucleotide nucleotidyltransferase.